The following is a 390-amino-acid chain: Chorismate synthase (390 aa).

The NADP(+) site is built by Arg-39 and Arg-45. Residues 132–134, 253–254, Gly-298, 313–317, and Arg-339 each bind FMN; these read RSS, NA, and KPIPT.

The protein belongs to the chorismate synthase family. As to quaternary structure, homotetramer. FMNH2 is required as a cofactor.

It catalyses the reaction 5-O-(1-carboxyvinyl)-3-phosphoshikimate = chorismate + phosphate. It functions in the pathway metabolic intermediate biosynthesis; chorismate biosynthesis; chorismate from D-erythrose 4-phosphate and phosphoenolpyruvate: step 7/7. In terms of biological role, catalyzes the anti-1,4-elimination of the C-3 phosphate and the C-6 proR hydrogen from 5-enolpyruvylshikimate-3-phosphate (EPSP) to yield chorismate, which is the branch point compound that serves as the starting substrate for the three terminal pathways of aromatic amino acid biosynthesis. This reaction introduces a second double bond into the aromatic ring system. This is Chorismate synthase from Bacillus subtilis (strain 168).